The chain runs to 319 residues: ATP-dependent 6-phosphofructokinase (319 aa).

Position 11 (Gly11) interacts with ATP. Residue 21–25 (RAVVR) participates in ADP binding. ATP contacts are provided by residues 72–73 (RS) and 102–105 (GDGS). Asp103 is a binding site for Mg(2+). 125–127 (TID) lines the substrate pocket. Asp127 acts as the Proton acceptor in catalysis. Arg154 serves as a coordination point for ADP. Substrate is bound by residues Arg162 and 169–171 (MGR). ADP-binding positions include 185–187 (GAE), Arg211, and 213–215 (KKH). Substrate-binding positions include Glu222, Arg243, and 249 to 252 (HIQR).

The protein belongs to the phosphofructokinase type A (PFKA) family. ATP-dependent PFK group I subfamily. Prokaryotic clade 'B1' sub-subfamily. Homotetramer. Mg(2+) serves as cofactor.

It is found in the cytoplasm. It carries out the reaction beta-D-fructose 6-phosphate + ATP = beta-D-fructose 1,6-bisphosphate + ADP + H(+). The protein operates within carbohydrate degradation; glycolysis; D-glyceraldehyde 3-phosphate and glycerone phosphate from D-glucose: step 3/4. Allosterically activated by ADP and other diphosphonucleosides, and allosterically inhibited by phosphoenolpyruvate. Catalyzes the phosphorylation of D-fructose 6-phosphate to fructose 1,6-bisphosphate by ATP, the first committing step of glycolysis. The polypeptide is ATP-dependent 6-phosphofructokinase (Oceanobacillus iheyensis (strain DSM 14371 / CIP 107618 / JCM 11309 / KCTC 3954 / HTE831)).